We begin with the raw amino-acid sequence, 520 residues long: Cobyric acid synthase (520 aa).

The GATase cobBQ-type domain occupies 257 to 451 (WLTVAAVRLP…VHGLLESDGF (195 aa)). Catalysis depends on Cys338, which acts as the Nucleophile. His443 is a catalytic residue.

Belongs to the CobB/CobQ family. CobQ subfamily.

Its pathway is cofactor biosynthesis; adenosylcobalamin biosynthesis. In terms of biological role, catalyzes amidations at positions B, D, E, and G on adenosylcobyrinic A,C-diamide. NH(2) groups are provided by glutamine, and one molecule of ATP is hydrogenolyzed for each amidation. The polypeptide is Cobyric acid synthase (Nocardia farcinica (strain IFM 10152)).